The chain runs to 410 residues: E3 ubiquitin-protein ligase PRT1 (410 aa).

2 consecutive RING-type zinc fingers follow at residues 26–66 and 192–232; these read CCVC…PICR and CSAC…QECN. The segment at 306 to 370 adopts a ZZ-type zinc-finger fold; the sequence is HFGAGCDSCG…RLELARSPQV (65 aa). Positions 311, 314, 326, 329, 338, 341, 356, and 360 each coordinate Zn(2+). The disordered stretch occupies residues 385–410; sequence ISNEGMDTDEGEEGPPGSSNESSSTE. Low complexity predominate over residues 399–410; the sequence is PPGSSNESSSTE.

Its subcellular location is the cytoplasm. It carries out the reaction S-ubiquitinyl-[E2 ubiquitin-conjugating enzyme]-L-cysteine + [acceptor protein]-L-lysine = [E2 ubiquitin-conjugating enzyme]-L-cysteine + N(6)-ubiquitinyl-[acceptor protein]-L-lysine.. The protein operates within protein modification; protein ubiquitination. Its function is as follows. E3 ubiquitin-protein ligase that mediates ubiquitination and subsequent proteasomal degradation of target proteins. Functions in the N-end rule pathway of protein degradation, where it specifically recognizes and ubiquitinates proteins with a N-terminal bulky aromatic amino acid (Phe). Does not act on aliphatic hydrophobic and basic N-terminal residues (Arg or Leu) containing proteins. This chain is E3 ubiquitin-protein ligase PRT1 (PRT1), found in Arabidopsis thaliana (Mouse-ear cress).